The following is a 761-amino-acid chain: MSKVRIYEYAKANNVQSKQLIESLKSMGVEVSNHMSAIDEETLNKAKQAGKPAAAKGQGSTSNQKQNSQNQRSNQGQKQRPQNNQQNQGQKQRPQNNQQSQSQGQTKRPSQASNNQSGAAKSQAGKPNQNRGGNRPGGQGRPGSNNRRPGNNQNRRNHGNRGGKRRPQSKVNHQQMPLPEKITISGSHTVSELAAKLHREASELIKKLIGLGVMATINQELDKDTIELLAADYGVEVEEEVIVDELDIELYDREDKEEELKERPPVVTIMGHVDHGKTTLLDSIRNTKVTAGEAGGITQHIGAYQIEHSGKKITFLDTPGHAAFTTMRARGAQVTDITILVVAADDGVMPQTKEAISHAKAAEVPIIVAVNKIDKETASPDRVMQELTEFELVPEAWGGDTIFVNVSALTGEGIDELIEMILLVAEVEEFKANPDKLATGTVVEAQLDKGRGPVATLLVQSGTLNVGDAVVVGSTFGRVRALVNDVGRRVKTAGPSAPVEITGLNEVPQAGDRFQAFEDEKKARQLGEGLMARYREQNLTASSKVSLDDLFNQIQQGDVKDINVIIKADVQGSVEAMKGSLEKIDVAGVKVNIIHTGAGAITESDIILASASNAIVIGFNVRPDVNAKRVAEAENVDIRLHRVIYNAIDEIEQAMKGALDPEFEEKVIGQVEVRTTFKVSKVGTIAGSYVTEGKITRNSSVRLIRDGIVIYEGELNALKRYKDDAKEVQAGYECGITLDKFNDIKEGDMIEAYVMEEVKRA.

Residues 39–179 are disordered; that stretch reads DEETLNKAKQ…KVNHQQMPLP (141 aa). Positions 45-105 are enriched in low complexity; the sequence is KAKQAGKPAA…NNQQSQSQGQ (61 aa). The span at 106-120 shows a compositional bias: polar residues; the sequence is TKRPSQASNNQSGAA. A compositionally biased stretch (low complexity) spans 142 to 154; the sequence is PGSNNRRPGNNQN. Residues 155–168 are compositionally biased toward basic residues; sequence RRNHGNRGGKRRPQ. One can recognise a tr-type G domain in the interval 262–435; it reads ERPPVVTIMG…EVEEFKANPD (174 aa). Positions 271–278 are G1; it reads GHVDHGKT. 271–278 is a GTP binding site; it reads GHVDHGKT. The interval 296–300 is G2; that stretch reads GITQH. The segment at 317 to 320 is G3; the sequence is DTPG. GTP-binding positions include 317–321 and 371–374; these read DTPGH and NKID. Positions 371-374 are G4; sequence NKID. A G5 region spans residues 407-409; the sequence is SAL.

The protein belongs to the TRAFAC class translation factor GTPase superfamily. Classic translation factor GTPase family. IF-2 subfamily.

The protein localises to the cytoplasm. In terms of biological role, one of the essential components for the initiation of protein synthesis. Protects formylmethionyl-tRNA from spontaneous hydrolysis and promotes its binding to the 30S ribosomal subunits. Also involved in the hydrolysis of GTP during the formation of the 70S ribosomal complex. The polypeptide is Translation initiation factor IF-2 (Shouchella clausii (strain KSM-K16) (Alkalihalobacillus clausii)).